The sequence spans 376 residues: UDP-N-acetylglucosamine--N-acetylmuramyl-(pentapeptide) pyrophosphoryl-undecaprenol N-acetylglucosamine transferase (376 aa).

Residues Thr-11–Gly-13, Asn-117, Arg-160, Ser-208, and Gln-310 contribute to the UDP-N-acetyl-alpha-D-glucosamine site.

The protein belongs to the glycosyltransferase 28 family. MurG subfamily.

It localises to the cell inner membrane. It catalyses the reaction di-trans,octa-cis-undecaprenyl diphospho-N-acetyl-alpha-D-muramoyl-L-alanyl-D-glutamyl-meso-2,6-diaminopimeloyl-D-alanyl-D-alanine + UDP-N-acetyl-alpha-D-glucosamine = di-trans,octa-cis-undecaprenyl diphospho-[N-acetyl-alpha-D-glucosaminyl-(1-&gt;4)]-N-acetyl-alpha-D-muramoyl-L-alanyl-D-glutamyl-meso-2,6-diaminopimeloyl-D-alanyl-D-alanine + UDP + H(+). Its pathway is cell wall biogenesis; peptidoglycan biosynthesis. Its function is as follows. Cell wall formation. Catalyzes the transfer of a GlcNAc subunit on undecaprenyl-pyrophosphoryl-MurNAc-pentapeptide (lipid intermediate I) to form undecaprenyl-pyrophosphoryl-MurNAc-(pentapeptide)GlcNAc (lipid intermediate II). This Rickettsia africae (strain ESF-5) protein is UDP-N-acetylglucosamine--N-acetylmuramyl-(pentapeptide) pyrophosphoryl-undecaprenol N-acetylglucosamine transferase.